Reading from the N-terminus, the 329-residue chain is Phenylalanine--tRNA ligase alpha subunit (329 aa).

A Mg(2+)-binding site is contributed by E254.

Belongs to the class-II aminoacyl-tRNA synthetase family. Phe-tRNA synthetase alpha subunit type 1 subfamily. Tetramer of two alpha and two beta subunits. Mg(2+) serves as cofactor.

It is found in the cytoplasm. The enzyme catalyses tRNA(Phe) + L-phenylalanine + ATP = L-phenylalanyl-tRNA(Phe) + AMP + diphosphate + H(+). This Haemophilus influenzae (strain 86-028NP) protein is Phenylalanine--tRNA ligase alpha subunit.